A 1693-amino-acid chain; its full sequence is MVLQGAKQRLCSSKNLDTCVLTPKYQTAYACEGKKLTIECEQGELINLIRANYGRFSITICNDHGNVEWSVNCMFPKSLTVLNSRCAHKNSCSVLAATSMFGDPCPGTHKYLEAHYQCVSAAQTSTTTNRPSPPPWVLNNGPPIFGNGSGLIHPTNIGGGSGGASAPPRLPTLPGVVGINGNGGMFNVPPPATHATPPGSTATLPGGRLKGVATSTTTTKHPAGRRDGLPPPPQLHHHHNHHTDETTPTKPSGKVPAASNATAPSNTRILTGVGGGGTDDGTLLTTKSSPNRTPGTAASGPSVSSNGSAVRTINNINLNAAGMAGADDETKLFCGPTHARNLFWNMTRVGDVNVQPCPGGAAGIAKWRCVLMKRMPDSSFDEDDEEMAGTSTTTPMSTSGDCLHNSSSCEPPVTMAHKVNQRLRNFEPTWHPLTPDLTQCRSLWLNNLEMRVNQRDSSLISIANDMSEVTSSKTLYGGDMLVTTKIIQTVSEKMLHDKETFPDQRQREAMIMELLHCVVKTGSNLLDESQLSSWLDLNPEDQMRVATSLLTGLEYNAFLLADTIIRERSVVQKVKNILLSVRVLETKTIQSSVVFPDSDQWPISSDRIELPRAALIENSEGGLVRIVFAAFDRLESILKPSYDHFDLKSSRSYVRNTAILTNDSDASAGDLQQRLRILNSKVISASLGKGRHIQLSQPITLTLKHLKTENVTNPTCVFWNYIDHAWSANGCSLESTNRTHSVCSCNHLTNFAILMDVVDEHQHSLFTMFDGNMRIFIYISIAICVVFIVIALLTLKLFNGVFVKSARTSIYINIYICLLAIELLFLLGIEQTETSIFCGFITVFLHCAILSGTSWFCYEAFHSYSTLTSDELLLEVDQTPKVNCYYLLSYGLSLSVVAISLVINPSTYTQNDYCVLMEANAVFYATFVAPVLIFFMAAIGYTFLSWIIMCRKSRTGLKTKEHTRLATVRFDIRCSFVFFLLLSAVWCSAYFYLRGAKMDEDVTGIYGYNFICFNTLLGLYIFVFHCIQNEKIRREYRKYVRQHAWLPKCLRCSKTSISSGIVAGGGTGLGGTNAGTLCSVSTAKKSKLPLGTNDDAHDEQQQQQHMSATEDAIMGASSDCELNEAQQRRTLKSGLITGTLQPSQSLGGHVVLERGNTLRSTGHASPTSSAGSTHLIFAHKQQQQQPPLGEAYYHQPDYYSWKQTAGGMKAQREYYNNAGAATSSPQQAHEVFYWTQKPNSQHGKKKRGGVGAIPASPSGSLHSRATAASQVLFYPSYKKTKPGQQAHPHYAEALDPPQPPNTAAYYQQQQQLRQQRQQQQQQLSSDEEQAEQHAHLLHLQHQQQQQQQRRAGGQQQLPAPPPHMAQYQQEFMQRQYRNKHSNCDLGDAYYNQGSVGGADGGPVYEEILSNRNSDAQHYEVGDFDVDEVYNNSVGTGVFNNMRAAVAAGGSRYGGSLSGGSVSSRNQQQQQHSLAQPISARRCTADEDDDEDEDDEETTAAEQLHDGVCDEEEEDEESDMEDDSHGLPPQSAERMRRLMALQDEDFKRRFQRQQRKHGAPVDYGTLPPGSAQAVIGGAHPEHNGAVFGVSGGVGEGSMRGALRQQHAKSPSARLAVNELFGHGNTGPPLPPANQTPAQKRQQLQKLSPQSTTSSSSHTSHSNPHSHPPHHQQRHLSAMLDENNTVRCYLEPLAK.

Residues 1–774 (MVLQGAKQRL…LFTMFDGNMR (774 aa)) lie on the Extracellular side of the membrane. One can recognise an SUEL-type lectin domain in the interval 30-119 (ACEGKKLTIE…KYLEAHYQCV (90 aa)). N-linked (GlcNAc...) asparagine glycosylation is found at Asn-147, Asn-260, Asn-306, and Asn-345. The interval 190–309 (PPATHATPPG…GPSVSSNGSA (120 aa)) is disordered. Composition is skewed to polar residues over residues 259–269 (SNATAPSNTRI) and 287–309 (KSSPNRTPGTAASGPSVSSNGSA). The segment at 379-406 (SFDEDDEEMAGTSTTTPMSTSGDCLHNS) is disordered. The span at 390–399 (TSTTTPMSTS) shows a compositional bias: low complexity. 4 N-linked (GlcNAc...) asparagine glycosylation sites follow: Asn-405, Asn-662, Asn-710, and Asn-737. The GAIN-B domain occupies 568–761 (RSVVQKVKNI…AILMDVVDEH (194 aa)). Cystine bridges form between Cys-716–Cys-743 and Cys-731–Cys-745. Residues 716-761 (CVFWNYIDHAWSANGCSLESTNRTHSVCSCNHLTNFAILMDVVDEH) form a GPS region. Residues 775 to 795 (IFIYISIAICVVFIVIALLTL) form a helical membrane-spanning segment. Over 796 to 808 (KLFNGVFVKSART) the chain is Cytoplasmic. A helical membrane pass occupies residues 809-829 (SIYINIYICLLAIELLFLLGI). The Extracellular portion of the chain corresponds to 830–835 (EQTETS). Residues 836–856 (IFCGFITVFLHCAILSGTSWF) traverse the membrane as a helical segment. At 857 to 882 (CYEAFHSYSTLTSDELLLEVDQTPKV) the chain is on the cytoplasmic side. Residues 883 to 903 (NCYYLLSYGLSLSVVAISLVI) traverse the membrane as a helical segment. Topologically, residues 904-927 (NPSTYTQNDYCVLMEANAVFYATF) are extracellular. The chain crosses the membrane as a helical span at residues 928–948 (VAPVLIFFMAAIGYTFLSWII). Over 949–975 (MCRKSRTGLKTKEHTRLATVRFDIRCS) the chain is Cytoplasmic. A helical membrane pass occupies residues 976-996 (FVFFLLLSAVWCSAYFYLRGA). Residues 997-1003 (KMDEDVT) are Extracellular-facing. A helical transmembrane segment spans residues 1004-1024 (GIYGYNFICFNTLLGLYIFVF). The Cytoplasmic portion of the chain corresponds to 1025–1693 (HCIQNEKIRR…VRCYLEPLAK (669 aa)). The disordered stretch occupies residues 1089–1109 (PLGTNDDAHDEQQQQQHMSAT). Phosphoserine occurs at positions 1165, 1256, and 1263. Disordered regions lie at residues 1237 to 1264 (KPNSQHGKKKRGGVGAIPASPSGSLHSR), 1279 to 1362 (KTKP…APPP), 1450 to 1529 (SRYG…LPPQ), and 1596 to 1678 (SMRG…SAML). Positions 1307 to 1323 (QQQQQLRQQRQQQQQQL) are enriched in low complexity. A phosphoserine mark is found at Ser-1324 and Ser-1325. A compositionally biased stretch (low complexity) spans 1337–1357 (LHLQHQQQQQQQRRAGGQQQL). Positions 1464–1475 (RNQQQQQHSLAQ) are enriched in polar residues. Composition is skewed to acidic residues over residues 1485–1498 (DEDDDEDEDDEETT) and 1508–1521 (CDEEEEDEESDMED). Residues 1640–1663 (QQLQKLSPQSTTSSSSHTSHSNPH) are compositionally biased toward low complexity.

Belongs to the G-protein coupled receptor 2 family. LN-TM7 subfamily. As to quaternary structure, forms a heterodimer, consisting of a large extracellular region non-covalently linked to a seven-transmembrane moiety. Post-translationally, proteolytically cleaved into 2 subunits, an extracellular subunit and a seven-transmembrane subunit.

It localises to the cell membrane. This is Latrophilin Cirl from Drosophila pseudoobscura pseudoobscura (Fruit fly).